A 343-amino-acid polypeptide reads, in one-letter code: N-acetyl-gamma-glutamyl-phosphate reductase (343 aa).

Cys-148 is a catalytic residue.

It belongs to the NAGSA dehydrogenase family. Type 1 subfamily.

Its subcellular location is the cytoplasm. It carries out the reaction N-acetyl-L-glutamate 5-semialdehyde + phosphate + NADP(+) = N-acetyl-L-glutamyl 5-phosphate + NADPH + H(+). It functions in the pathway amino-acid biosynthesis; L-arginine biosynthesis; N(2)-acetyl-L-ornithine from L-glutamate: step 3/4. Catalyzes the NADPH-dependent reduction of N-acetyl-5-glutamyl phosphate to yield N-acetyl-L-glutamate 5-semialdehyde. The protein is N-acetyl-gamma-glutamyl-phosphate reductase of Caldicellulosiruptor saccharolyticus (strain ATCC 43494 / DSM 8903 / Tp8T 6331).